The primary structure comprises 482 residues: Signal recognition particle protein (482 aa).

GTP-binding positions include 107–114 (GLQGTGKT), 189–193 (DTAGR), and 247–250 (TKLD). Disordered regions lie at residues 380 to 413 (MTTE…TDVS) and 452 to 482 (FGGQ…FGQL). Over residues 452-468 (FGGQPGPGFRGYRGGGG) the composition is skewed to gly residues. A compositionally biased stretch (basic residues) spans 469–482 (KPKKKKKKKGFGQL).

The protein belongs to the GTP-binding SRP family. SRP54 subfamily. Part of the signal recognition particle protein translocation system, which is composed of SRP and FtsY.

It localises to the cytoplasm. It carries out the reaction GTP + H2O = GDP + phosphate + H(+). In terms of biological role, involved in targeting and insertion of nascent membrane proteins into the cytoplasmic membrane. Binds to the hydrophobic signal sequence of the ribosome-nascent chain (RNC) as it emerges from the ribosomes. The SRP-RNC complex is then targeted to the cytoplasmic membrane where it interacts with the SRP receptor FtsY. This Synechocystis sp. (strain ATCC 27184 / PCC 6803 / Kazusa) protein is Signal recognition particle protein.